Consider the following 476-residue polypeptide: Cysteine--tRNA ligase (476 aa).

Cys31 contributes to the Zn(2+) binding site. The 'HIGH' region signature appears at 33–43; the sequence is PTVYNYAHIGN. The Zn(2+) site is built by Cys211, His236, and Glu240. The 'KMSKS' region signature appears at 269 to 273; that stretch reads KMSKS. Lys272 lines the ATP pocket.

The protein belongs to the class-I aminoacyl-tRNA synthetase family. Monomer. Requires Zn(2+) as cofactor.

The protein resides in the cytoplasm. It carries out the reaction tRNA(Cys) + L-cysteine + ATP = L-cysteinyl-tRNA(Cys) + AMP + diphosphate. This Xanthomonas oryzae pv. oryzae (strain MAFF 311018) protein is Cysteine--tRNA ligase.